A 326-amino-acid chain; its full sequence is DNA-directed RNA polymerase subunit alpha (326 aa).

The alpha N-terminal domain (alpha-NTD) stretch occupies residues 1–231 (MQTALLKPKI…DQLSVFAALE (231 aa)). The tract at residues 247-326 (IDPILLRPVD…ENWPPAGLEK (80 aa)) is alpha C-terminal domain (alpha-CTD).

Belongs to the RNA polymerase alpha chain family. Homodimer. The RNAP catalytic core consists of 2 alpha, 1 beta, 1 beta' and 1 omega subunit. When a sigma factor is associated with the core the holoenzyme is formed, which can initiate transcription.

The catalysed reaction is RNA(n) + a ribonucleoside 5'-triphosphate = RNA(n+1) + diphosphate. Functionally, DNA-dependent RNA polymerase catalyzes the transcription of DNA into RNA using the four ribonucleoside triphosphates as substrates. This chain is DNA-directed RNA polymerase subunit alpha, found in Cupriavidus necator (strain ATCC 17699 / DSM 428 / KCTC 22496 / NCIMB 10442 / H16 / Stanier 337) (Ralstonia eutropha).